The following is a 78-amino-acid chain: NAD(P)H-quinone oxidoreductase subunit O (78 aa).

The protein belongs to the complex I NdhO subunit family. In terms of assembly, NDH-1 can be composed of about 15 different subunits; different subcomplexes with different compositions have been identified which probably have different functions.

The protein localises to the cellular thylakoid membrane. The catalysed reaction is a plastoquinone + NADH + (n+1) H(+)(in) = a plastoquinol + NAD(+) + n H(+)(out). It carries out the reaction a plastoquinone + NADPH + (n+1) H(+)(in) = a plastoquinol + NADP(+) + n H(+)(out). Functionally, NDH-1 shuttles electrons from an unknown electron donor, via FMN and iron-sulfur (Fe-S) centers, to quinones in the respiratory and/or the photosynthetic chain. The immediate electron acceptor for the enzyme in this species is believed to be plastoquinone. Couples the redox reaction to proton translocation, and thus conserves the redox energy in a proton gradient. Cyanobacterial NDH-1 also plays a role in inorganic carbon-concentration. This Prochlorococcus marinus (strain AS9601) protein is NAD(P)H-quinone oxidoreductase subunit O.